Consider the following 303-residue polypeptide: GGSCGQCRVKVKSGGGDILPTELDHISKGEAREGERLSCQVSVKVDMDIELPEEIFGVKKWECEVISNDNKATFIKELKMAIPNGEVVPFRAGGYIQIEAPAHHVKYSDYDIPEEYRGDWQHFGFFDVESKVDEDTIRAYSMANCPEEAGIIMLNVRIATPPPRDLSLPAGKMSSYIFSLKAGDKVTISGPFGEFFAKETDNEMVFVGGGAGMAPMRSHIFDQLNRLDTKRKVSFWYGARSKREMFYVEDFDMLAKENENFEWHVALSDPQPEDNWEGYTGFIHNVILENYLGNHEAPEDCEY.

The 2Fe-2S ferredoxin-type domain maps to 1-55 (GGSCGQCRVKVKSGGGDILPTELDHISKGEAREGERLSCQVSVKVDMDIELPEEI). Residues cysteine 4, cysteine 7, and cysteine 39 each contribute to the [2Fe-2S] cluster site. The FAD-binding FR-type domain maps to 58 to 198 (VKKWECEVIS…SGPFGEFFAK (141 aa)). The segment at 201-303 (DNEMVFVGGG…NHEAPEDCEY (103 aa)) is catalytic.

The protein belongs to the NqrF family. Composed of six subunits; NqrA, NqrB, NqrC, NqrD, NqrE and NqrF. Requires [2Fe-2S] cluster as cofactor. It depends on FAD as a cofactor.

Its subcellular location is the cell inner membrane. It catalyses the reaction a ubiquinone + n Na(+)(in) + NADH + H(+) = a ubiquinol + n Na(+)(out) + NAD(+). In terms of biological role, NQR complex catalyzes the reduction of ubiquinone-1 to ubiquinol by two successive reactions, coupled with the transport of Na(+) ions from the cytoplasm to the periplasm. The first step is catalyzed by NqrF, which accepts electrons from NADH and reduces ubiquinone-1 to ubisemiquinone by a one-electron transfer pathway. This Moritella marina (Vibrio marinus) protein is Na(+)-translocating NADH-quinone reductase subunit F (nqrF).